We begin with the raw amino-acid sequence, 663 residues long: LEAF RUST 10 DISEASE-RESISTANCE LOCUS RECEPTOR-LIKE PROTEIN KINASE-like 1.4 (663 aa).

An N-terminal signal peptide occupies residues methionine 1–serine 25. Over serine 26–glycine 241 the chain is Extracellular. N-linked (GlcNAc...) asparagine glycosylation is found at asparagine 36, asparagine 64, asparagine 106, asparagine 137, and asparagine 208. A helical transmembrane segment spans residues isoleucine 242 to isoleucine 262. At arginine 263 to leucine 663 the chain is on the cytoplasmic side. A disordered region spans residues serine 282–serine 304. Low complexity predominate over residues arginine 290–serine 304. The region spanning glutamate 334–isoleucine 609 is the Protein kinase domain. Residues leucine 340–valine 348 and lysine 362 contribute to the ATP site. Aspartate 458 (proton acceptor) is an active-site residue. The tract at residues leucine 637 to leucine 663 is disordered. Residues tryptophan 653–leucine 663 are compositionally biased toward polar residues.

The protein belongs to the protein kinase superfamily. Ser/Thr protein kinase family.

The protein localises to the cell membrane. The enzyme catalyses L-seryl-[protein] + ATP = O-phospho-L-seryl-[protein] + ADP + H(+). It carries out the reaction L-threonyl-[protein] + ATP = O-phospho-L-threonyl-[protein] + ADP + H(+). This chain is LEAF RUST 10 DISEASE-RESISTANCE LOCUS RECEPTOR-LIKE PROTEIN KINASE-like 1.4, found in Arabidopsis thaliana (Mouse-ear cress).